We begin with the raw amino-acid sequence, 96 residues long: Guanyl-specific ribonuclease Sa (96 aa).

A disulfide bridge links cysteine 7 with cysteine 96. Glutamate 54 serves as the catalytic Proton acceptor. The active-site Proton donor is histidine 85.

The protein belongs to the ribonuclease N1/T1 family.

Its subcellular location is the secreted. It carries out the reaction [RNA] containing guanosine + H2O = an [RNA fragment]-3'-guanosine-3'-phosphate + a 5'-hydroxy-ribonucleotide-3'-[RNA fragment].. The chain is Guanyl-specific ribonuclease Sa (rnaSA) from Kitasatospora aureofaciens (Streptomyces aureofaciens).